Consider the following 561-residue polypeptide: Potassium-transporting ATPase potassium-binding subunit (561 aa).

10 consecutive transmembrane segments (helical) span residues 4–24 (IVMQ…PLGI), 65–85 (AVSV…VLML), 133–153 (IGLT…LFAV), 177–197 (LYIL…QGVV), 253–273 (FTNL…VVMF), 285–305 (AIMT…TISE), 380–400 (GLYG…LLVG), 417–437 (MVCL…AVAV), 484–504 (MVGA…ALYL), and 528–548 (FIGL…LPAL).

Belongs to the KdpA family. As to quaternary structure, the system is composed of three essential subunits: KdpA, KdpB and KdpC.

It is found in the cell membrane. In terms of biological role, part of the high-affinity ATP-driven potassium transport (or Kdp) system, which catalyzes the hydrolysis of ATP coupled with the electrogenic transport of potassium into the cytoplasm. This subunit binds the extracellular potassium ions and delivers the ions to the membrane domain of KdpB through an intramembrane tunnel. This is Potassium-transporting ATPase potassium-binding subunit from Listeria monocytogenes serotype 4b (strain F2365).